The following is a 269-amino-acid chain: Fructose permease IIC component (269 aa).

The PTS EIIC type-4 domain maps to 1-234; it reads MSSLQIILLL…GALGLCLALL (234 aa). The next 7 helical transmembrane spans lie at 2–22, 35–54, 64–86, 90–110, 149–169, 181–201, and 206–226; these read SSLQIILLLIIAAITGIASVL, TLVGLVLGDLKTGIILGGTL, VGLAMAPDTAIASVISTILVITA, IGEGIAVAVALAAAGQALTIF, VMIPTLIVALISVSAVQAFLG, IGGGIIVVVGYAMVINMMNIP, and FFYIGFLLAAFTDFNLVGFGA.

The protein resides in the cell membrane. Functionally, the phosphoenolpyruvate-dependent sugar phosphotransferase system (PTS), a major carbohydrate active -transport system, catalyzes the phosphorylation of incoming sugar substrates concomitant with their translocation across the cell membrane. This system is involved in fructose transport. The polypeptide is Fructose permease IIC component (levF) (Bacillus subtilis (strain 168)).